A 490-amino-acid chain; its full sequence is Sushi domain-containing protein 4 (490 aa).

Positions 1 to 21 (MYHGMNPSNGDGFLEQQQQQQ) are disordered. Residues 1 to 41 (MYHGMNPSNGDGFLEQQQQQQQPQSPQRLLAVILWFQLALC) form the signal peptide. The Extracellular segment spans residues 42–319 (FGPAQLTGGF…PSTHETLLTT (278 aa)). Sushi domains follow at residues 55-119 (QVCA…ICVQ), 120-179 (EDCR…ICQG), 178-239 (QGCL…RCLA), and 241-304 (EVCP…YCIK). Cystine bridges form between Cys-57-Cys-99, Cys-85-Cys-117, Cys-122-Cys-165, Cys-147-Cys-177, Cys-180-Cys-224, Cys-210-Cys-237, Cys-243-Cys-289, and Cys-274-Cys-302. Asn-104 and Asn-134 each carry an N-linked (GlcNAc...) asparagine glycan. N-linked (GlcNAc...) asparagine glycosylation occurs at Asn-192. Residues 320 to 340 (WKIVAFTATSVLLVLLLVILA) form a helical membrane-spanning segment. Topologically, residues 341 to 490 (RMFQTKFKAH…DEIPLMEEDP (150 aa)) are cytoplasmic. The tract at residues 401 to 490 (GCPLPVDDQS…DEIPLMEEDP (90 aa)) is disordered. Over residues 430-456 (CDSVSGSSELLQSLYSPPRCQESTHPA) the composition is skewed to polar residues. Residues 479 to 490 (IADEIPLMEEDP) show a composition bias toward acidic residues.

As to expression, isoform 3 is the predominant isoform in all tissues except cortex, cerebellum, kidney, and breast. Isoform 1 is found primarily in the esophagus and the brain.

It localises to the membrane. The protein localises to the secreted. Functionally, acts as a complement inhibitor by disrupting the formation of the classical C3 convertase. Isoform 3 inhibits the classical complement pathway, while membrane-bound isoform 1 inhibits deposition of C3b via both the classical and alternative complement pathways. This is Sushi domain-containing protein 4 (SUSD4) from Homo sapiens (Human).